The primary structure comprises 200 residues: UPF0301 protein BR0480/BS1330_I0481 (200 aa).

This sequence belongs to the UPF0301 (AlgH) family.

The polypeptide is UPF0301 protein BR0480/BS1330_I0481 (Brucella suis biovar 1 (strain 1330)).